Consider the following 62-residue polypeptide: Potassium channel toxin kappa-KTx 3.2 (62 aa).

The signal sequence occupies residues 1–26; that stretch reads MKSTLMTASLLILVLLSIVDYASVYA. Residues 27–36 constitute a propeptide that is removed on maturation; the sequence is ELIDSEISME. 2 disulfide bridges follow: Cys-43-Cys-61 and Cys-47-Cys-57.

It belongs to the short scorpion toxin superfamily. Potassium channel inhibitor kappa-KTx family. Kappa-KTx 3 subfamily. As to expression, expressed by the venom gland.

Its subcellular location is the secreted. In terms of biological role, potassium channel inhibitor (Kv). The chain is Potassium channel toxin kappa-KTx 3.2 from Heterometrus petersii (Asian forest scorpion).